The sequence spans 115 residues: Large ribosomal subunit protein bL19 (115 aa).

It belongs to the bacterial ribosomal protein bL19 family.

In terms of biological role, this protein is located at the 30S-50S ribosomal subunit interface and may play a role in the structure and function of the aminoacyl-tRNA binding site. In Buchnera aphidicola subsp. Acyrthosiphon pisum (strain 5A), this protein is Large ribosomal subunit protein bL19.